Reading from the N-terminus, the 600-residue chain is Proline--tRNA ligase (600 aa).

The protein belongs to the class-II aminoacyl-tRNA synthetase family. ProS type 1 subfamily. As to quaternary structure, homodimer.

It is found in the cytoplasm. The catalysed reaction is tRNA(Pro) + L-proline + ATP = L-prolyl-tRNA(Pro) + AMP + diphosphate. Catalyzes the attachment of proline to tRNA(Pro) in a two-step reaction: proline is first activated by ATP to form Pro-AMP and then transferred to the acceptor end of tRNA(Pro). As ProRS can inadvertently accommodate and process non-cognate amino acids such as alanine and cysteine, to avoid such errors it has two additional distinct editing activities against alanine. One activity is designated as 'pretransfer' editing and involves the tRNA(Pro)-independent hydrolysis of activated Ala-AMP. The other activity is designated 'posttransfer' editing and involves deacylation of mischarged Ala-tRNA(Pro). The misacylated Cys-tRNA(Pro) is not edited by ProRS. The sequence is that of Proline--tRNA ligase from Prochlorococcus marinus (strain MIT 9301).